A 513-amino-acid polypeptide reads, in one-letter code: GMP synthase [glutamine-hydrolyzing] (513 aa).

Residues 9–198 (LILVLDFGSQ…VRRVCNCTGE (190 aa)) enclose the Glutamine amidotransferase type-1 domain. The active-site Nucleophile is Cys-86. Residues His-172 and Glu-174 contribute to the active site. Residues 199–388 (WTMENFIEIE…LGIPEHLVWR (190 aa)) enclose the GMPS ATP-PPase domain. 226–232 (SGGVDSS) lines the ATP pocket.

Homodimer.

It carries out the reaction XMP + L-glutamine + ATP + H2O = GMP + L-glutamate + AMP + diphosphate + 2 H(+). It functions in the pathway purine metabolism; GMP biosynthesis; GMP from XMP (L-Gln route): step 1/1. Its function is as follows. Catalyzes the synthesis of GMP from XMP. The chain is GMP synthase [glutamine-hydrolyzing] from Staphylococcus epidermidis (strain ATCC 12228 / FDA PCI 1200).